A 452-amino-acid polypeptide reads, in one-letter code: tRNA modification GTPase MnmE (452 aa).

(6S)-5-formyl-5,6,7,8-tetrahydrofolate-binding residues include arginine 21, glutamate 78, and lysine 118. Positions 214–375 (GMKVVIAGRP…LREHLKQAMG (162 aa)) constitute a TrmE-type G domain. Asparagine 224 contributes to the K(+) binding site. GTP is bound by residues 224–229 (NAGKSS), 243–249 (TDIAGTT), and 268–271 (DTAG). Serine 228 serves as a coordination point for Mg(2+). 3 residues coordinate K(+): threonine 243, isoleucine 245, and threonine 248. Threonine 249 lines the Mg(2+) pocket. (6S)-5-formyl-5,6,7,8-tetrahydrofolate is bound at residue lysine 452.

This sequence belongs to the TRAFAC class TrmE-Era-EngA-EngB-Septin-like GTPase superfamily. TrmE GTPase family. Homodimer. Heterotetramer of two MnmE and two MnmG subunits. K(+) is required as a cofactor.

Its subcellular location is the cytoplasm. Exhibits a very high intrinsic GTPase hydrolysis rate. Involved in the addition of a carboxymethylaminomethyl (cmnm) group at the wobble position (U34) of certain tRNAs, forming tRNA-cmnm(5)s(2)U34. This Haemophilus influenzae (strain PittGG) protein is tRNA modification GTPase MnmE.